The sequence spans 278 residues: Envelope glycoprotein L (278 aa).

The N-terminal stretch at 1–30 (MCRRPDCGFSFSPGPVVLLWCCLLLPIVSS) is a signal peptide. A gL betaherpesvirus-type domain is found at 43–256 (VPAECPELTR…DKYYAGLPPE (214 aa)). Cys-154 and Cys-159 are disulfide-bonded.

Belongs to the herpesviridae glycoprotein L (gL) family. Betaherpesvirinae gL subfamily. As to quaternary structure, interacts with glycoprotein H (gH); this interaction is necessary for the correct processing and cell surface expression of gH. Forms the envelope pentamer complex (PC) composed of gH, gL, UL128, UL130, and UL131A. The pentamer interacts with host NRP2. Forms the envelope trimer complex composed of gH, gL, and gO. The trimer interacts with host PDGFRA. The trimer also interacts with host EPHA2.

The protein resides in the virion membrane. It localises to the host cell membrane. Its subcellular location is the host Golgi apparatus. The protein localises to the host trans-Golgi network. Its function is as follows. The heterodimer glycoprotein H-glycoprotein L is required for the fusion of viral and plasma membranes leading to virus entry into the host cell. Acts as a functional inhibitor of gH and maintains gH in an inhibited form. Upon binding to host integrins, gL dissociates from gH leading to activation of the viral fusion glycoproteins gB and gH. In human cytomegalovirus, forms two distincts complexes to mediate viral entry, a trimer and a pentamer at the surface of the virion envelope. The gH-gL-gO trimer is required for infection in fibroblasts by interacting with host PDGFRA, and in glioblastoma cells by interacting with host EPHA2. The gH-gL-UL128-UL130-UL131A pentamer is essential for viral entry in epithelial, endothelial and myeloid cells via interaction with host NRP2. The polypeptide is Envelope glycoprotein L (Human cytomegalovirus (strain 5040) (HHV-5)).